The chain runs to 239 residues: ATP synthase subunit a (239 aa).

The next 5 helical transmembrane spans lie at 27–47, 86–106, 125–145, 190–210, and 211–231; these read GQVF…VVLG, LPFI…GALI, INTT…AGLS, LAVA…VMLL, and GLFT…FYIG.

It belongs to the ATPase A chain family. F-type ATPases have 2 components, CF(1) - the catalytic core - and CF(0) - the membrane proton channel. CF(1) has five subunits: alpha(3), beta(3), gamma(1), delta(1), epsilon(1). CF(0) has four main subunits: a, b, b' and c.

Its subcellular location is the cellular thylakoid membrane. Key component of the proton channel; it plays a direct role in the translocation of protons across the membrane. This chain is ATP synthase subunit a, found in Synechococcus sp. (strain RCC307).